The following is a 514-amino-acid chain: Acetylcholine receptor subunit gamma (514 aa).

The first 22 residues, Met-1–Cys-22, serve as a signal peptide directing secretion. Over Arg-23 to Lys-241 the chain is Extracellular. Cys-150 and Cys-164 are oxidised to a cystine. N-linked (GlcNAc...) asparagine glycosylation is present at Asn-163. Transmembrane regions (helical) follow at residues Pro-242–Leu-266, Cys-275–Ala-293, and Tyr-309–Val-330. The Cytoplasmic segment spans residues Ser-331 to Arg-473. The residue at position 386 (Tyr-386) is a Phosphotyrosine; by Tyr-kinases. A helical membrane pass occupies residues Val-474 to Ala-494.

Belongs to the ligand-gated ion channel (TC 1.A.9) family. Acetylcholine receptor (TC 1.A.9.1) subfamily. Gamma/CHRNG sub-subfamily. Pentamer of two alpha chains, and one each of the beta, delta, and gamma chains.

It localises to the postsynaptic cell membrane. The protein localises to the cell membrane. It catalyses the reaction K(+)(in) = K(+)(out). The catalysed reaction is Na(+)(in) = Na(+)(out). Functionally, after binding acetylcholine, the AChR responds by an extensive change in conformation that affects all subunits and leads to opening of an ion-conducting channel across the plasma membrane. The polypeptide is Acetylcholine receptor subunit gamma (CHRNG) (Gallus gallus (Chicken)).